Reading from the N-terminus, the 334-residue chain is Amino acid--[acyl-carrier-protein] ligase 2 (334 aa).

Cys-131 contacts Zn(2+). ATP-binding positions include Arg-159, Glu-161, and 168–169; that span reads RL. Glu-176 provides a ligand contact to Zn(2+). Residue Glu-176 participates in an L-alpha-amino acid binding. ATP is bound by residues Lys-235 and 250-253; that span reads ACMS. Cys-279 is a Zn(2+) binding site. An ATP-binding site is contributed by Arg-286.

This sequence belongs to the class-II aminoacyl-tRNA synthetase family. Amino acid--[acyl-carrier-protein] ligase subfamily. In terms of assembly, homodimer. Requires Zn(2+) as cofactor.

The enzyme catalyses an L-alpha-amino acid + holo-[ACP] + ATP = an L-alpha-aminoacyl-[ACP] + AMP + diphosphate. Functionally, catalyzes the ATP-dependent activation of L-glycine and its transfer to the phosphopantetheine prosthetic group covalently attached to the vicinal carrier protein blr6284 of yet unknown function. May participate in nonribosomal peptide synthesis or related processes. L-alanine is a poor substrate whereas L-serine or D-amino acids are not substrates for ATP-dependent activation. Does not display tRNA aminoacylation activity. The protein is Amino acid--[acyl-carrier-protein] ligase 2 of Bradyrhizobium diazoefficiens (strain JCM 10833 / BCRC 13528 / IAM 13628 / NBRC 14792 / USDA 110).